The sequence spans 154 residues: uncharacterized protein (154 aa).

2 helical membrane passes run 19-39 (LFAYAAAFLIAVAHVAGGLLL) and 51-71 (ADQVAMGALGLVLAGAVLLFA).

The protein resides in the cell membrane. This is an uncharacterized protein from Mycobacterium tuberculosis (strain CDC 1551 / Oshkosh).